A 550-amino-acid chain; its full sequence is Probable endochitinase (550 aa).

The first 16 residues, 1-16, serve as a signal peptide directing secretion; the sequence is MLHYLATILWLAVAHA. 2 N-linked (GlcNAc...) asparagine; by host glycosylation sites follow: Asn146 and Asn172. In terms of domain architecture, GH18 spans 147–547; that stretch reads KTVAAYFVEW…NAMNERVRVK (401 aa). The active-site Proton donor is Glu304. N-linked (GlcNAc...) asparagine; by host glycosylation occurs at Asn344. The short motif at 547-550 is the Prevents secretion from ER element; it reads KDEL.

This sequence belongs to the glycosyl hydrolase 18 family. Chitinase class II subfamily.

The protein localises to the host endoplasmic reticulum lumen. The enzyme catalyses Random endo-hydrolysis of N-acetyl-beta-D-glucosaminide (1-&gt;4)-beta-linkages in chitin and chitodextrins.. The polypeptide is Probable endochitinase (Orgyia pseudotsugata (Douglas-fir tussock moth)).